A 286-amino-acid chain; its full sequence is Pantothenate synthetase (286 aa).

Residue 30–37 (MGNLHRGH) coordinates ATP. Residue His-37 is the Proton donor of the active site. Gln-61 lines the (R)-pantoate pocket. Gln-61 is a binding site for beta-alanine. Residue 149 to 152 (GEKD) participates in ATP binding. Position 155 (Gln-155) interacts with (R)-pantoate. Residues Val-178 and 186–189 (LSSR) each bind ATP.

The protein belongs to the pantothenate synthetase family. Homodimer.

Its subcellular location is the cytoplasm. It catalyses the reaction (R)-pantoate + beta-alanine + ATP = (R)-pantothenate + AMP + diphosphate + H(+). It participates in cofactor biosynthesis; (R)-pantothenate biosynthesis; (R)-pantothenate from (R)-pantoate and beta-alanine: step 1/1. In terms of biological role, catalyzes the condensation of pantoate with beta-alanine in an ATP-dependent reaction via a pantoyl-adenylate intermediate. In Nitrosococcus oceani (strain ATCC 19707 / BCRC 17464 / JCM 30415 / NCIMB 11848 / C-107), this protein is Pantothenate synthetase.